We begin with the raw amino-acid sequence, 126 residues long: Aspartate 1-decarboxylase (126 aa).

Ser-25 acts as the Schiff-base intermediate with substrate; via pyruvic acid in catalysis. At Ser-25 the chain carries Pyruvic acid (Ser). Thr-57 contacts substrate. The active-site Proton donor is the Tyr-58. 73 to 75 (GAA) serves as a coordination point for substrate.

It belongs to the PanD family. Heterooctamer of four alpha and four beta subunits. It depends on pyruvate as a cofactor. Is synthesized initially as an inactive proenzyme, which is activated by self-cleavage at a specific serine bond to produce a beta-subunit with a hydroxyl group at its C-terminus and an alpha-subunit with a pyruvoyl group at its N-terminus.

It localises to the cytoplasm. The enzyme catalyses L-aspartate + H(+) = beta-alanine + CO2. It participates in cofactor biosynthesis; (R)-pantothenate biosynthesis; beta-alanine from L-aspartate: step 1/1. Functionally, catalyzes the pyruvoyl-dependent decarboxylation of aspartate to produce beta-alanine. The sequence is that of Aspartate 1-decarboxylase from Chromohalobacter salexigens (strain ATCC BAA-138 / DSM 3043 / CIP 106854 / NCIMB 13768 / 1H11).